The chain runs to 116 residues: Large ribosomal subunit protein bL17 (116 aa).

Belongs to the bacterial ribosomal protein bL17 family. As to quaternary structure, part of the 50S ribosomal subunit. Contacts protein L32.

The protein is Large ribosomal subunit protein bL17 of Crocosphaera subtropica (strain ATCC 51142 / BH68) (Cyanothece sp. (strain ATCC 51142)).